The following is a 712-amino-acid chain: Protein SDA1 homolog (712 aa).

Thr-234 is subject to Phosphothreonine. The residue at position 236 (Ser-236) is a Phosphoserine. 2 disordered regions span residues 488 to 573 (TIDI…DMRI) and 662 to 712 (VNEH…KKMK). 2 stretches are compositionally biased toward acidic residues: residues 491-501 (IESEDDTDSND) and 516-559 (GADD…ESGE). Over residues 560–572 (ESAKAKKEKKDMR) the composition is skewed to basic and acidic residues. Composition is skewed to basic residues over residues 671 to 692 (REKR…KVKK) and 700 to 712 (ALRK…KKMK).

Belongs to the SDA1 family.

It localises to the nucleus. Its subcellular location is the nucleolus. Functionally, required for 60S pre-ribosomal subunits export to the cytoplasm. The polypeptide is Protein SDA1 homolog (Mys45A) (Drosophila melanogaster (Fruit fly)).